The following is a 123-amino-acid chain: Phosphoribosyl-AMP cyclohydrolase (123 aa).

Residue aspartate 73 participates in Mg(2+) binding. Cysteine 74 is a binding site for Zn(2+). Mg(2+)-binding residues include aspartate 75 and aspartate 77. Residues cysteine 90 and cysteine 97 each contribute to the Zn(2+) site.

The protein belongs to the PRA-CH family. As to quaternary structure, homodimer. The cofactor is Mg(2+). Requires Zn(2+) as cofactor.

The protein localises to the cytoplasm. It carries out the reaction 1-(5-phospho-beta-D-ribosyl)-5'-AMP + H2O = 1-(5-phospho-beta-D-ribosyl)-5-[(5-phospho-beta-D-ribosylamino)methylideneamino]imidazole-4-carboxamide. Its pathway is amino-acid biosynthesis; L-histidine biosynthesis; L-histidine from 5-phospho-alpha-D-ribose 1-diphosphate: step 3/9. Its function is as follows. Catalyzes the hydrolysis of the adenine ring of phosphoribosyl-AMP. This chain is Phosphoribosyl-AMP cyclohydrolase, found in Methanoregula boonei (strain DSM 21154 / JCM 14090 / 6A8).